The following is a 142-amino-acid chain: Small ribosomal subunit protein bS16 (142 aa).

The tract at residues 101–142 is disordered; it reads RPSFDALGGDDAGKGEAITQKKKAEKKDEAAAESSSSESTEA. A compositionally biased stretch (low complexity) spans 132–142; it reads AESSSSESTEA.

The protein belongs to the bacterial ribosomal protein bS16 family.

This is Small ribosomal subunit protein bS16 from Streptomyces avermitilis (strain ATCC 31267 / DSM 46492 / JCM 5070 / NBRC 14893 / NCIMB 12804 / NRRL 8165 / MA-4680).